We begin with the raw amino-acid sequence, 373 residues long: Phosphoserine aminotransferase (373 aa).

L-glutamate is bound at residue Arg-46. Pyridoxal 5'-phosphate contacts are provided by Phe-104, Thr-150, Asp-172, and Gln-195. N6-(pyridoxal phosphate)lysine is present on Lys-196. Residue 247–248 (NT) participates in pyridoxal 5'-phosphate binding.

This sequence belongs to the class-V pyridoxal-phosphate-dependent aminotransferase family. SerC subfamily. Homodimer. Pyridoxal 5'-phosphate serves as cofactor.

The protein localises to the cytoplasm. It catalyses the reaction O-phospho-L-serine + 2-oxoglutarate = 3-phosphooxypyruvate + L-glutamate. The catalysed reaction is 4-(phosphooxy)-L-threonine + 2-oxoglutarate = (R)-3-hydroxy-2-oxo-4-phosphooxybutanoate + L-glutamate. The protein operates within amino-acid biosynthesis; L-serine biosynthesis; L-serine from 3-phospho-D-glycerate: step 2/3. Its pathway is cofactor biosynthesis; pyridoxine 5'-phosphate biosynthesis; pyridoxine 5'-phosphate from D-erythrose 4-phosphate: step 3/5. In terms of biological role, catalyzes the reversible conversion of 3-phosphohydroxypyruvate to phosphoserine and of 3-hydroxy-2-oxo-4-phosphonooxybutanoate to phosphohydroxythreonine. This chain is Phosphoserine aminotransferase, found in Rhodococcus opacus (strain B4).